Reading from the N-terminus, the 119-residue chain is Large ribosomal subunit protein bL20 (119 aa).

Belongs to the bacterial ribosomal protein bL20 family.

Its function is as follows. Binds directly to 23S ribosomal RNA and is necessary for the in vitro assembly process of the 50S ribosomal subunit. It is not involved in the protein synthesizing functions of that subunit. The sequence is that of Large ribosomal subunit protein bL20 from Laribacter hongkongensis (strain HLHK9).